A 404-amino-acid polypeptide reads, in one-letter code: MMDWATLPKDLLDLISKCLESSFDLIQFRSVCSSWRSAAGPKRLLWAHNLPFFPSDDKPFLSNVILRVAHQSILLIKPNEPQCEADLFGWIVKVWDNIYVSRKMTLLKPLSSSRNYFPQHLPRIFDMSKFTVRELCREVKLYHPDYYCVPGHTALELELGKTVVKYLNDDKFVLLTILEYGKLAVFRSWDREWTVINDYIPSRCQDLIMFDGRFFAIDYNGRTVVVDYSSFKLTLAANPLIGGGDKKFLIESCGEMFLVDIEFCLNEKPEFTGGFYSYFNETTVSYKFKFFKLVEREKRWVEVEDLGDKMFFLGDDSTFSASTADIIPRCVGTGSFVFFYTHEESLVVMDDRNLGVFDFRSGKTELVNKLPEYAKLFWPPPPWITTSHESVENYTGETSSQSQS.

Residues 2 to 50 (MDWATLPKDLLDLISKCLESSFDLIQFRSVCSSWRSAAGPKRLLWAHNL) form the F-box domain.

This chain is F-box protein At2g17036, found in Arabidopsis thaliana (Mouse-ear cress).